Reading from the N-terminus, the 166-residue chain is Large ribosomal subunit protein uL11 (166 aa).

This sequence belongs to the universal ribosomal protein uL11 family. Part of the ribosomal stalk of the 50S ribosomal subunit. Interacts with L10 and the large rRNA to form the base of the stalk. L10 forms an elongated spine to which L12 dimers bind in a sequential fashion forming a multimeric L10(L12)X complex.

Functionally, forms part of the ribosomal stalk which helps the ribosome interact with GTP-bound translation factors. The sequence is that of Large ribosomal subunit protein uL11 from Methanopyrus kandleri (strain AV19 / DSM 6324 / JCM 9639 / NBRC 100938).